The following is a 2089-amino-acid chain: Rho GTPase-activating protein 32 (2089 aa).

The disordered stretch occupies residues 24–52; that stretch reads TQLTDGDEEEREESFRKMKSSIHSEEDDF. Residues 131–245 form the PX; atypical domain; the sequence is GSIQLSLSEE…LTWMEIDNKG (115 aa). Positions 259 to 321 constitute an SH3 domain; sequence PAVGAAHVIK…PGHCVELINQ (63 aa). Positions 372–567 constitute a Rho-GAP domain; sequence CDLGEHLLNS…FILNHVDVLF (196 aa). 4 positions are modified to phosphoserine: Ser-706, Ser-709, Ser-732, and Ser-738. Residues 828–837 are compositionally biased toward basic and acidic residues; that stretch reads KLSPSKKDAE. A disordered region spans residues 828-858; the sequence is KLSPSKKDAEAGGSQSQTPGSTASSEPVSPV. The span at 840–854 shows a compositional bias: polar residues; that stretch reads GSQSQTPGSTASSEP. 4 positions are modified to phosphoserine: Ser-852, Ser-856, Ser-892, and Ser-952. 3 disordered regions span residues 955–1037, 1119–1141, and 1154–1197; these read QLQL…PPPP, CNQPLPEAAAMGGPTQSNTTDSG, and LHRN…SVST. Polar residues-rich tracts occupy residues 998–1014 and 1132–1141; these read LSSQSKAVPSGQSQTGA and PTQSNTTDSG. A compositionally biased stretch (basic and acidic residues) spans 1175–1191; the sequence is DSEKSDDHGSFPEDHAG. Ser-1206 bears the Phosphoserine mark. A disordered region spans residues 1221-1368; it reads GTSVDKPHHS…GDPAPIFLSD (148 aa). Positions 1225–1235 are enriched in basic and acidic residues; that stretch reads DKPHHSSELTD. The segment covering 1262–1275 has biased composition (low complexity); it reads TATMAYMMATPARA. Positions 1395-1714 are interaction with GAB2; that stretch reads RAPPLHLRAE…YNYAGLPPRP (320 aa). Asymmetric dimethylarginine occurs at positions 1526 and 1536. Position 1588 is a phosphoserine (Ser-1588). An interaction with FYN region spans residues 1688 to 2089; it reads SSRDFAFYNP…PHPDTQIHAE (402 aa). 2 disordered regions span residues 1801-1865 and 1881-2002; these read PGKT…QSSL and RAHQ…LERD. Positions 1826-1841 are enriched in basic and acidic residues; sequence GDERFYRKHPESEFDR. Residues 1850–1865 show a composition bias toward polar residues; sequence STQAEKPSLPQKQSSL. The span at 1881–1892 shows a compositional bias: basic and acidic residues; the sequence is RAHQEASHRQLC. Residues 1918-1939 are compositionally biased toward polar residues; the sequence is SEPSNYHNSGKYMTSGQGSLTL. Basic and acidic residues-rich tracts occupy residues 1940–1954 and 1961–1975; these read NHKEVRLPKDLDRPR and PEKHSRDCYKEEEHF. Arg-2039 carries the omega-N-methylarginine modification.

This sequence belongs to the PX domain-containing GAP family. As to quaternary structure, interacts with NTRK1 (via cytoplasmic domain); the interaction is independent of the phosphorylation state of NTRK1. Interacts with SHC3 (via SH2 domain). Interacts with RASA1 (via SH3 domain); the interaction is necessary for the Ras activation and cell transforming activities of ARHGAP32. Interacts with GAB1 and GAB2. Interacts with CRK and CRKL. Found in a complex with CRKL and BCAR1; upon EGF stimulation BCAR1 may be replaced by EGFR. Interacts with NCK1 (via SH3 domain); NCK1 recruits phosphorylated BCAR1 to the complex. Isoform 2 interacts with FYN; the interaction appears to be dependent on tyrosine phosphorylation of ARHGAP32. Interacts with EGFR; the interaction requires EGF stimulation and is increased by SHC3. Interacts with CDC42; the interaction requires constitutively active CDC42. Interacts with CTNNB1, DLG4, CDH2 and GRIN2B. Interacts with GPHN. Post-translationally, isoform 2 is phosphorylated on multiple tyrosine residues by FYN. Phosphorylated tyrosine residues undergo dephosphorylation after stimulation of NMDA receptors. Phosphorylated in vitro by CaMK2 in the presence of calmodulin and calcium; which inhibits GAP activity. In terms of tissue distribution, isoform 1 and isoform 2 are highly expressed in brain, specially in cortex, corpus striatum, hippocampus and thalamus. Low levels in cerebellum, colon, small intestine, and kidney.

The protein localises to the postsynaptic density. It localises to the cell projection. It is found in the dendritic spine. Its subcellular location is the cytoplasm. The protein resides in the cell cortex. The protein localises to the endosome membrane. It localises to the golgi apparatus membrane. It is found in the endoplasmic reticulum membrane. Its subcellular location is the membrane. GTPase-activating protein (GAP) promoting GTP hydrolysis on RHOA, CDC42 and RAC1 small GTPases. May be involved in the differentiation of neuronal cells during the formation of neurite extensions. Involved in NMDA receptor activity-dependent actin reorganization in dendritic spines. May mediate cross-talks between Ras- and Rho-regulated signaling pathways in cell growth regulation. Isoform 2 has higher GAP activity. This Mus musculus (Mouse) protein is Rho GTPase-activating protein 32 (Arhgap32).